A 121-amino-acid chain; its full sequence is uncharacterized protein (121 aa).

The next 3 helical transmembrane spans lie at 1-21 (MILW…IMPV), 55-75 (LKYI…FCSI), and 92-112 (LFFK…IHFL).

It is found in the membrane. This is an uncharacterized protein from Saccharomyces cerevisiae (strain ATCC 204508 / S288c) (Baker's yeast).